The sequence spans 199 residues: uncharacterized protein (199 aa).

Residues 1-48 form a disordered region; it reads MSANEFYSSGQQGQYNQQNNQERTGAPNNGQYGADNGNPNGERGLFST. An N-acetylserine modification is found at Ser2. Low complexity predominate over residues 7 to 21; it reads YSSGQQGQYNQQNNQ. Residues 22–31 show a composition bias toward polar residues; the sequence is ERTGAPNNGQ. Ser53 and Ser70 each carry phosphoserine. Positions 89–199 are disordered; sequence RKEHKQQEQY…RQGFNGGSRW (111 aa). Gly residues-rich tracts occupy residues 124–163, 170–179, and 186–199; these read GGFGGPGGPGGQGFGRQGPQGFGGPGPQEFGGPGGQGFGG, GGPGGQGFGG, and GGQGRQGFNGGSRW.

It localises to the mitochondrion. This is an uncharacterized protein from Saccharomyces cerevisiae (strain ATCC 204508 / S288c) (Baker's yeast).